The chain runs to 212 residues: Redox-sensing transcriptional repressor Rex (212 aa).

Residues Ile16 to Phe55 constitute a DNA-binding region (H-T-H motif). NAD(+) is bound at residue Gly90–Gly95.

This sequence belongs to the transcriptional regulatory Rex family. As to quaternary structure, homodimer.

The protein resides in the cytoplasm. Its function is as follows. Modulates transcription in response to changes in cellular NADH/NAD(+) redox state. This Levilactobacillus brevis (strain ATCC 367 / BCRC 12310 / CIP 105137 / JCM 1170 / LMG 11437 / NCIMB 947 / NCTC 947) (Lactobacillus brevis) protein is Redox-sensing transcriptional repressor Rex.